Here is a 376-residue protein sequence, read N- to C-terminus: Ribonuclease D (376 aa).

In terms of domain architecture, 3'-5' exonuclease spans 8 to 176 (IQWIRDDASL…VYLALDARLS (169 aa)). The HRDC domain occupies 214–294 (RPQQLAVLRE…AEAARLPQSE (81 aa)).

This sequence belongs to the RNase D family. Requires a divalent metal cation as cofactor.

The protein localises to the cytoplasm. It catalyses the reaction Exonucleolytic cleavage that removes extra residues from the 3'-terminus of tRNA to produce 5'-mononucleotides.. Functionally, exonuclease involved in the 3' processing of various precursor tRNAs. Initiates hydrolysis at the 3'-terminus of an RNA molecule and releases 5'-mononucleotides. The sequence is that of Ribonuclease D from Pseudomonas paraeruginosa (strain DSM 24068 / PA7) (Pseudomonas aeruginosa (strain PA7)).